The following is a 143-amino-acid chain: Nucleoside diphosphate kinase (143 aa).

6 residues coordinate ATP: Lys-11, Phe-59, Arg-87, Thr-93, Arg-104, and Asn-114. Catalysis depends on His-117, which acts as the Pros-phosphohistidine intermediate.

This sequence belongs to the NDK family. Homotetramer. Requires Mg(2+) as cofactor.

It is found in the cytoplasm. It catalyses the reaction a 2'-deoxyribonucleoside 5'-diphosphate + ATP = a 2'-deoxyribonucleoside 5'-triphosphate + ADP. The enzyme catalyses a ribonucleoside 5'-diphosphate + ATP = a ribonucleoside 5'-triphosphate + ADP. Major role in the synthesis of nucleoside triphosphates other than ATP. The ATP gamma phosphate is transferred to the NDP beta phosphate via a ping-pong mechanism, using a phosphorylated active-site intermediate. The polypeptide is Nucleoside diphosphate kinase (Salmonella agona (strain SL483)).